Here is a 220-residue protein sequence, read N- to C-terminus: Ribosomal RNA small subunit methyltransferase Nep1 (220 aa).

S-adenosyl-L-methionine is bound by residues Gly-178, Gly-183, and 196 to 201; that span reads IYKEPL.

This sequence belongs to the class IV-like SAM-binding methyltransferase superfamily. RNA methyltransferase NEP1 family. As to quaternary structure, homodimer.

The catalysed reaction is a pseudouridine in rRNA + S-adenosyl-L-methionine = an N(1)-methylpseudouridine in rRNA + S-adenosyl-L-homocysteine + H(+). Its function is as follows. Methyltransferase involved in ribosomal biogenesis. Specifically catalyzes the N1-methylation of the pseudouridine corresponding to position 914 in M.jannaschii 16S rRNA. This Thermococcus sibiricus (strain DSM 12597 / MM 739) protein is Ribosomal RNA small subunit methyltransferase Nep1.